The primary structure comprises 242 residues: Type III pantothenate kinase (242 aa).

Position 7–14 (7–14 (DLGNSRFK)) interacts with ATP. Residues tyrosine 91 and 98–101 (GVDR) contribute to the substrate site. The Proton acceptor role is filled by aspartate 100. Threonine 121 contributes to the ATP binding site. Position 171 (threonine 171) interacts with substrate.

It belongs to the type III pantothenate kinase family. In terms of assembly, homodimer. The cofactor is NH4(+). K(+) serves as cofactor.

Its subcellular location is the cytoplasm. It catalyses the reaction (R)-pantothenate + ATP = (R)-4'-phosphopantothenate + ADP + H(+). The protein operates within cofactor biosynthesis; coenzyme A biosynthesis; CoA from (R)-pantothenate: step 1/5. Its function is as follows. Catalyzes the phosphorylation of pantothenate (Pan), the first step in CoA biosynthesis. This chain is Type III pantothenate kinase, found in Xanthomonas campestris pv. campestris (strain 8004).